The following is a 427-amino-acid chain: Glutamate-1-semialdehyde 2,1-aminomutase (427 aa).

An N6-(pyridoxal phosphate)lysine modification is found at Lys-265.

This sequence belongs to the class-III pyridoxal-phosphate-dependent aminotransferase family. HemL subfamily. As to quaternary structure, homodimer. It depends on pyridoxal 5'-phosphate as a cofactor.

The protein resides in the cytoplasm. It carries out the reaction (S)-4-amino-5-oxopentanoate = 5-aminolevulinate. Its pathway is porphyrin-containing compound metabolism; protoporphyrin-IX biosynthesis; 5-aminolevulinate from L-glutamyl-tRNA(Glu): step 2/2. The polypeptide is Glutamate-1-semialdehyde 2,1-aminomutase (Burkholderia cenocepacia (strain HI2424)).